The chain runs to 274 residues: UPF0758 protein RHE_CH01848 (274 aa).

The interval 1 to 37 (MAKGPVATSSDDELPFETEEPVADERSFFGGRPQKPA) is disordered. Acidic residues predominate over residues 10-22 (SDDELPFETEEPV). One can recognise an MPN domain in the interval 152–274 (VLSSWSSVIQ…HVSLKGLKLI (123 aa)). Residues His-223, His-225, and Asp-236 each contribute to the Zn(2+) site. The short motif at 223 to 236 (HNHPSGDPTPSRAD) is the JAMM motif element.

Belongs to the UPF0758 family.

This is UPF0758 protein RHE_CH01848 from Rhizobium etli (strain ATCC 51251 / DSM 11541 / JCM 21823 / NBRC 15573 / CFN 42).